Reading from the N-terminus, the 1583-residue chain is MIPHSSAGVQQWGHHPLHALNPGAGRTDTASALGPSDLQLEKAPMSAPQPQLRQPAVVDLTTHSGDTSEREPPSKRLRLDLPSVASTGDASPASGNGEPRNTPSTSTPTAKPSSLSWRGRPVWSFQALISEIPGSGGMSEEDAAAVAQSGKPASPPPFPVLPWKYAPPEAAGNKSVKSRDSSPAKKVQTTPYHIECPSVAPVLKGQKVADFSPWTGNHPEDVLNEQTAKQGHYDRTQVSQNESNTARPSLYAQLKHRSGLQMLSSVFAAALEKRQSHNLVNAPSTFKPPPRVTLTDNKREAWLRDLANPSVPLRRLSRTIPHGIRGKALLDQCLSKWIPVNRAVWLAKCVGANEIRAFKRKGTSGAVVIGLEAKWVREWTAHVQQFLEGLVAACGTADWKMKMTYAVGLTARLFFERLLDDEQYLGWFLSSLEAASLNTVPVWLLMLGIYWDSIMRYRKRGRRLAEALLEKLRQVTNPEHATTLRPLVDRLSLHIRTLVVEHTSSVILPNSWAKYKDLVLSCLNMKDNTHKAIFQNVAERNARIQLSKDRQDSGQRSPQQRVIHLFDAVCSTHDVASAAAACLKTIDDKSLLVTKLLEWTATPFRCGLCRVYTAVRLLRKWKMSGVDIDTYILSFLTRTGNRASLTMDNIYHVISELVRSQTFSVGRYLQWLMAKGVSSSNQSDHSIDLYLLKQLPMTRLPDHVRNLRNTLLYRAGVPATLEDSTIAELKASIAGRLPNIFGNEVEHTMVVESPSLDLTWAVKSEIGQWLRRGISGHCRNATSAMAGITVPADRNVSRLTPDEFYHIRDVLESFGDLSMLADVVKQTTSCDDNIVLASAADTVNYHFDSFCVIGATSDLFRSLVESYARLKRLGTPNLDLVFSLIELGLRLPQECNTVALLRQDLLRIESKSALAAPSPLSDNPSTAINEADPSFRSKLDQLLSSGGGMDESTMASIFASLTNILTGRNEDVKLSANETCRYLAYLRPFHPKHFDAMLVRWVCGLLKSSARSTMPHILPPLIGVGCVTIHAFVFLVKKLLQSERIASKIPNPARLKMDILDLLVPPAPGQSRYFDLVTYRFHLAQQEFLLKYYKETLDIICDALSTNAAAAGINSELRSSATTLLRLLLAQEPEDVVQYCLQKISAQHSTFTSVLQDTLDQLLQSVSLHDPQVSMAENVIRTTDDFSLPFCQLKLQVLSNAESKENMGDGIVDVMFKAAVADTRAKGSNWIGLVRLMSPNSVQQIRERAEKEFFAVPLFAETLGDQSLSYAPNTEALETAKLYLTIIDKLAYSIPEAGVQSVGPILVEKMDLLLHKLVVMQTSLVTRQGVVSDQATQSRANFERALAFWFSALLRMIVIHRTAFNVPSSVPRATVVQDQSRLLVSIFCISLARLPTNILRLYPTADYFPHPISSEGYRPCPGILLQTHALDVAASLIDTFPDESRQQCARFLKDKCPPFLQFQNDNRFSYLLGPVPDAGTSNIPPPASVPSPAAAAASTPTPTPSSGLPPGSSTQQASSTLSGIPTGVSEDCVASRLRLQYRGRTIGPYPVRPWELLEDAAPIVGVNDTAVNLKFFDARRVRA.

Disordered regions lie at residues 1–117 (MIPH…SLSW) and 1481–1525 (SNIP…SGIP). Basic and acidic residues predominate over residues 66 to 79 (DTSEREPPSKRLRL). Composition is skewed to low complexity over residues 102–114 (TPSTSTPTAKPSS) and 1490–1514 (PSPAAAAASTPTPTPSSGLPPGSST).

This sequence belongs to the Mediator complex subunit 12 family. In terms of assembly, component of the srb8-11 complex, which itself associates with the Mediator complex.

The protein localises to the nucleus. Component of the srb8-11 complex. The srb8-11 complex is a regulatory module of the Mediator complex which is itself involved in regulation of basal and activated RNA polymerase II-dependent transcription. The srb8-11 complex may be involved in the transcriptional repression of a subset of genes regulated by Mediator. It may inhibit the association of the Mediator complex with RNA polymerase II to form the holoenzyme complex. In Aspergillus terreus (strain NIH 2624 / FGSC A1156), this protein is Mediator of RNA polymerase II transcription subunit 12 (srb8).